We begin with the raw amino-acid sequence, 499 residues long: Phenylalanine--tRNA ligase alpha subunit (499 aa).

Residues T342, 381-383 (QID), and F422 contribute to the L-phenylalanine site. A Mg(2+)-binding site is contributed by E424. F447 serves as a coordination point for L-phenylalanine.

It belongs to the class-II aminoacyl-tRNA synthetase family. Phe-tRNA synthetase alpha subunit type 2 subfamily. Tetramer of two alpha and two beta subunits. Mg(2+) serves as cofactor.

The protein localises to the cytoplasm. It carries out the reaction tRNA(Phe) + L-phenylalanine + ATP = L-phenylalanyl-tRNA(Phe) + AMP + diphosphate + H(+). The polypeptide is Phenylalanine--tRNA ligase alpha subunit (Pyrococcus horikoshii (strain ATCC 700860 / DSM 12428 / JCM 9974 / NBRC 100139 / OT-3)).